A 360-amino-acid chain; its full sequence is 3-dehydroquinate synthase (360 aa).

Residues 104–108 (GVIGD), 128–129 (TT), Lys-141, and 168–171 (FLDT) each bind NAD(+). Zn(2+)-binding residues include Glu-183, His-243, and His-260.

This sequence belongs to the sugar phosphate cyclases superfamily. Dehydroquinate synthase family. The cofactor is Co(2+). Requires Zn(2+) as cofactor. It depends on NAD(+) as a cofactor.

The protein localises to the cytoplasm. The catalysed reaction is 7-phospho-2-dehydro-3-deoxy-D-arabino-heptonate = 3-dehydroquinate + phosphate. The protein operates within metabolic intermediate biosynthesis; chorismate biosynthesis; chorismate from D-erythrose 4-phosphate and phosphoenolpyruvate: step 2/7. Functionally, catalyzes the conversion of 3-deoxy-D-arabino-heptulosonate 7-phosphate (DAHP) to dehydroquinate (DHQ). The protein is 3-dehydroquinate synthase of Streptococcus equi subsp. equi (strain 4047).